A 298-amino-acid polypeptide reads, in one-letter code: Inosose dehydratase (298 aa).

This sequence belongs to the IolE/MocC family. It depends on glutathione as a cofactor. Co(2+) is required as a cofactor. The cofactor is Mn(2+).

The enzyme catalyses scyllo-inosose = 3D-3,5/4-trihydroxycyclohexane-1,2-dione + H2O. Its function is as follows. Catalyzes the dehydration of inosose (2-keto-myo-inositol, 2KMI or 2,4,6/3,5-pentahydroxycyclohexanone) to 3D-(3,5/4)-trihydroxycyclohexane-1,2-dione (D-2,3-diketo-4-deoxy-epi-inositol). This chain is Inosose dehydratase, found in Yersinia enterocolitica serotype O:8 / biotype 1B (strain NCTC 13174 / 8081).